A 273-amino-acid chain; its full sequence is Large ribosomal subunit protein uL2 (273 aa).

Residues 221-263 are disordered; that stretch reads RGTAMNPVDHPHGGGEGRNFGKHPVTPWGVQTKGKKTRHNKRT. A compositionally biased stretch (basic residues) spans 253–263; sequence KGKKTRHNKRT.

Belongs to the universal ribosomal protein uL2 family. In terms of assembly, part of the 50S ribosomal subunit. Forms a bridge to the 30S subunit in the 70S ribosome.

Its function is as follows. One of the primary rRNA binding proteins. Required for association of the 30S and 50S subunits to form the 70S ribosome, for tRNA binding and peptide bond formation. It has been suggested to have peptidyltransferase activity; this is somewhat controversial. Makes several contacts with the 16S rRNA in the 70S ribosome. The polypeptide is Large ribosomal subunit protein uL2 (Actinobacillus succinogenes (strain ATCC 55618 / DSM 22257 / CCUG 43843 / 130Z)).